The chain runs to 1111 residues: Atrial natriuretic peptide-converting enzyme (1111 aa).

Over 1 to 112 the chain is Cytoplasmic; the sequence is MGRVSFNVRV…QKLVTANLLR (112 aa). Residues 93–96 carry the DDNN motif motif; sequence ADSS. The chain crosses the membrane as a helical; Signal-anchor for type II membrane protein span at residues 113–133; the sequence is FLLLVLIPCICALIVLLAILL. Over 134–1111 the chain is Extracellular; it reads SFVGTLKKVY…QTFLQKKSQG (978 aa). Asn147 carries N-linked (GlcNAc...) asparagine glycosylation. Residues 199 to 325 form the FZ 1 domain; the sequence is GNTSTCVNIT…SDASRICFSL (127 aa). Intrachain disulfides connect Cys204-Cys264, Cys212-Cys257, Cys248-Cys288, Cys277-Cys322, Cys281-Cys305, Cys335-Cys348, Cys343-Cys361, Cys355-Cys370, Cys372-Cys384, Cys379-Cys397, Cys391-Cys406, Cys408-Cys421, Cys416-Cys434, Cys428-Cys443, Cys445-Cys458, Cys453-Cys471, Cys465-Cys480, Cys521-Cys584, Cys529-Cys577, Cys568-Cys606, Cys595-Cys636, Cys599-Cys623, Cys646-Cys658, Cys653-Cys671, Cys665-Cys680, Cys682-Cys696, Cys690-Cys709, Cys703-Cys718, Cys721-Cys733, Cys728-Cys746, and Cys740-Cys755. Asn296 is a glycosylation site (N-linked (GlcNAc...) asparagine). LDL-receptor class A domains lie at 334-371, 371-407, 407-444, and 444-481; these read LCGGGESFLCTSGLCISKKLQCNGYNDCDDWSDEAHCN, NCSEDLFHCGTGKCLHHSLVCDGYDDCGDLSDEQNCD, DCNLTKEHRCGDGRCIAAEWVCDGDHDCVDKSDEVNCS, and SCPSQGLVECRSGQCIPSTFQCDGDEDCKDGSDEENCS. N-linked (GlcNAc...) asparagine glycosylation is present at Asn409. In terms of domain architecture, FZ 2 spans 516–639; sequence SNCSHCEPIT…SSDNQTCLLP (124 aa). A glycan (N-linked (GlcNAc...) asparagine) is linked at Asn535. LDL-receptor class A domains lie at 645–681, 681–719, and 720–756; these read ECSPSHFKCRSGRCVLGSRRCDGQADCDDDSDEENCG, GCKERDLWECPLNKQCLKHTLICDGFPDCSDSMDEKNCS, and FCQDDELECANHECVPRDLWCDGWTDCSDSSDEWGCV. One can recognise an SRCR domain in the interval 756–851; the sequence is VTLSKNGNSS…SGSEISLLCT (96 aa). An N-linked (GlcNAc...) asparagine glycan is attached at Asn763. 4 disulfides stabilise this stretch: Cys855/Cys977, Cys893/Cys909, Cys991/Cys1056, and Cys1020/Cys1035. The Peptidase S1 domain occupies 867-1100; it reads ILGGRTSRPG…FVDWIERQIY (234 aa). Residues His908 and Asp957 each act as charge relay system in the active site. Ser1050 acts as the Charge relay system in catalysis.

Belongs to the peptidase S1 family. Post-translationally, N-glycosylated; required for processing and activation. In terms of processing, activated through proteolytic processing by a trypsin-like protease; cleaved into a N-terminal propeptide and an activated corin protease fragment. Atrial natriuretic peptide-converting enzyme, 180 kDa soluble fragment is produced by cleavage by ADAM10. Cleavage by ADAM10 to produce soluble 180 kDa soluble fragment takes place after the transmembrane region and before FZ 1. A disulfide bond links the activated corin protease fragment and the N-terminal propeptide. The disulfide bond also links the activated corin protease fragment with Atrial natriuretic peptide-converting enzyme, 180 kDa soluble fragment. As to expression, specifically expressed in heart. Also detected in kidney, aorta, brain and testis. In kidney, present in epithelial cells, with segmental expression in the proximal tubule, thick ascending limb, connecting tubule, and throughout the collecting duct (at protein level).

The protein localises to the cell membrane. Its subcellular location is the cytoplasmic vesicle. It is found in the secreted. Its function is as follows. Serine-type endopeptidase involved in atrial natriuretic peptide (NPPA) processing. Converts through proteolytic cleavage the non-functional propeptide NPPA into the active hormone, thereby regulating blood pressure in heart and promoting natriuresis, diuresis and vasodilation. Proteolytic cleavage of pro-NPPA also plays a role in female pregnancy by promoting trophoblast invasion and spiral artery remodeling in uterus. Also acts as a regulator of sodium reabsorption in kidney. May also process pro-NPPB the B-type natriuretic peptide. This is Atrial natriuretic peptide-converting enzyme (Corin) from Rattus norvegicus (Rat).